A 238-amino-acid polypeptide reads, in one-letter code: Lytic polysaccharide monooxygenase NCU01050 (238 aa).

The signal sequence occupies residues 1–15 (MKVLAPLVLASAASA). Histidine 16 is a Cu(2+) binding site. O2 is bound at residue glutamate 45. 2 disulfide bridges follow: cysteine 54-cysteine 186 and cysteine 156-cysteine 238. The N-linked (GlcNAc...) asparagine glycan is linked to asparagine 75. Histidine 99 contacts Cu(2+). O2 contacts are provided by histidine 172 and glutamine 181. Histidine 172 (proton donor) is an active-site residue. Tyrosine 183 is a Cu(2+) binding site.

This sequence belongs to the polysaccharide monooxygenase AA9 family. As to quaternary structure, monomer. The cofactor is Cu(2+). In terms of processing, N-linked glycans containing mannose and N-acetylglucosamine.

It is found in the secreted. The catalysed reaction is [(1-&gt;4)-beta-D-glucosyl]n+m + reduced acceptor + O2 = 4-dehydro-beta-D-glucosyl-[(1-&gt;4)-beta-D-glucosyl]n-1 + [(1-&gt;4)-beta-D-glucosyl]m + acceptor + H2O.. It functions in the pathway glycan metabolism; cellulose degradation. Its activity is regulated as follows. Inhibited by increasing levels of ascorbic acid. Its function is as follows. Catalyzes the oxidative cleavage of glycosidic bonds in cellulosic substrates via a copper-dependent mechanism. In the presence of an exogenous reductant ascorbic acid, degrades phosphoric acid swollen cellulose (PASC) to cello-oligosaccharides and 4-ketoaldoses, the end products oxidized at the non-reducing end. Somewhat active toward tamarind xyloglucan and konjac glucomannan, with improved activity with glucomannan in the presence of PASC. H(2)O(2) is able to substitute for O(2) in reactions with PASC, xyloglucan and glucomannan. Very weak activity on cellopentaose. No activity with birchwood xylan or ivory nut mannan. Disrupts plant cell wall polysaccharide substrates, such as recalcitrant crystalline cellulose. In Neurospora crassa (strain ATCC 24698 / 74-OR23-1A / CBS 708.71 / DSM 1257 / FGSC 987), this protein is Lytic polysaccharide monooxygenase NCU01050.